The primary structure comprises 460 residues: Serine--tRNA ligase (460 aa).

Position 255–257 (255–257) interacts with L-serine; it reads TAE. Residues 286 to 288 and V302 each bind ATP; that span reads RKE. An L-serine-binding site is contributed by E309. Residue 373-376 coordinates ATP; sequence EMVS. T409 contacts L-serine.

It belongs to the class-II aminoacyl-tRNA synthetase family. Type-1 seryl-tRNA synthetase subfamily. In terms of assembly, homodimer. The tRNA molecule binds across the dimer.

The protein resides in the cytoplasm. It carries out the reaction tRNA(Ser) + L-serine + ATP = L-seryl-tRNA(Ser) + AMP + diphosphate + H(+). The enzyme catalyses tRNA(Sec) + L-serine + ATP = L-seryl-tRNA(Sec) + AMP + diphosphate + H(+). It functions in the pathway aminoacyl-tRNA biosynthesis; selenocysteinyl-tRNA(Sec) biosynthesis; L-seryl-tRNA(Sec) from L-serine and tRNA(Sec): step 1/1. Catalyzes the attachment of serine to tRNA(Ser). Is also able to aminoacylate tRNA(Sec) with serine, to form the misacylated tRNA L-seryl-tRNA(Sec), which will be further converted into selenocysteinyl-tRNA(Sec). This Hyperthermus butylicus (strain DSM 5456 / JCM 9403 / PLM1-5) protein is Serine--tRNA ligase.